The chain runs to 629 residues: Sushi domain-containing protein 5 (629 aa).

Positions 1–35 are cleaved as a signal peptide; the sequence is MTAEGPSPPARWHRRLPGLWAAALLLLGLPRLSVR. Residues 36–574 are Extracellular-facing; sequence ADGKFFVLES…DGCPGLSRGP (539 aa). Positions 39–134 constitute a Link domain; that stretch reads KFFVLESQNG…GGTYSALCIK (96 aa). Disulfide bonds link Cys-61–Cys-132, Cys-140–Cys-184, and Cys-167–Cys-197. Residues 138-199 form the Sushi domain; it reads KPCGDPPSFP…WYGLVQACGK (62 aa). Residues 225–249 show a composition bias toward basic and acidic residues; it reads EDSRTEADEDRGQGDSSEEAPKQDR. 2 disordered regions span residues 225 to 252 and 344 to 403; these read EDSR…RLVS and DGPS…GLDE. The helical transmembrane segment at 575–595 threads the bilayer; that stretch reads VIATIVTVLCLLLLLAGVGMV. Topologically, residues 596–629 are cytoplasmic; sequence WGYRKCQHKSSVYKLNVGQRQARHYHQQIEMEKV.

It is found in the membrane. The protein is Sushi domain-containing protein 5 (SUSD5) of Homo sapiens (Human).